Consider the following 540-residue polypeptide: Upstream-binding protein 1 (540 aa).

Ser-22 is subject to Phosphoserine. Residues Glu-60 to Leu-296 form the Grh/CP2 DB domain. Disordered stretches follow at residues Lys-236–Ile-270 and Glu-285–Ala-368. A compositionally biased stretch (basic and acidic residues) spans Lys-238–Tyr-262. The span at Tyr-320–Ala-368 shows a compositional bias: polar residues. Phosphoserine is present on residues Ser-390 and Ser-393.

The protein belongs to the grh/CP2 family. CP2 subfamily. As to quaternary structure, interacts with TFCP2. Interacts with PIAS1, and is probably part of a complex containing TFCP2, UBP1 and PIAS1. Expressed in adrenal tissue, JEG-3, NCI-H295A, Hep-G2 and HeLa cell lines.

It localises to the nucleus. Its function is as follows. Functions as a transcriptional activator in a promoter context-dependent manner. Modulates the placental expression of CYP11A1. Involved in regulation of the alpha-globin gene in erythroid cells. Activation of the alpha-globin promoter in erythroid cells is via synergistic interaction with TFCP2. Involved in regulation of the alpha-globin gene in erythroid cells. Binds strongly to sequences around the HIV-1 initiation site and weakly over the TATA-box. Represses HIV-1 transcription by inhibiting the binding of TFIID to the TATA-box. This Homo sapiens (Human) protein is Upstream-binding protein 1 (UBP1).